The sequence spans 1159 residues: WASH complex subunit 5 (1159 aa).

Belongs to the strumpellin family. Component of the WASH complex.

The protein localises to the early endosome. Functionally, acts at least in part as component of the WASH complex which seems to regulate washc1 nucleation-promoting factor (NPF) activity and is required for its membrane targeting during endosomal sorting. The chain is WASH complex subunit 5 from Xenopus tropicalis (Western clawed frog).